The chain runs to 112 residues: Small ribosomal subunit protein bS6 (112 aa).

The protein belongs to the bacterial ribosomal protein bS6 family.

Its function is as follows. Binds together with bS18 to 16S ribosomal RNA. The chain is Small ribosomal subunit protein bS6 from Hyphomonas neptunium (strain ATCC 15444).